We begin with the raw amino-acid sequence, 506 residues long: Acetylcholine receptor subunit gamma (506 aa).

The signal sequence occupies residues 1–17 (MVLTLLLIICLALEVRS). Residues 18–235 (ENEEGRLIEK…IIFFLIIQRK (218 aa)) lie on the Extracellular side of the membrane. The N-linked (GlcNAc...) asparagine glycan is linked to Asn85. A disulfide bridge links Cys145 with Cys159. 3 helical membrane-spanning segments follow: residues 236-260 (PLFY…VYFL), 269-287 (CTLS…FLIA), and 303-324 (YLIF…VLNV). Residues 325 to 466 (SLRTPNTHSL…WVLIGKVIDK (142 aa)) are Cytoplasmic-facing. The residue at position 381 (Tyr381) is a Phosphotyrosine; by Tyr-kinases. Residues 467-490 (ACFWIALLLFSIGTLAIFLTGHFN) traverse the membrane as a helical segment.

It belongs to the ligand-gated ion channel (TC 1.A.9) family. Acetylcholine receptor (TC 1.A.9.1) subfamily. Gamma/CHRNG sub-subfamily. As to quaternary structure, pentamer of two alpha chains, and one each of the beta, delta, and gamma chains. In terms of processing, seems not to be glycosylated on Asn-158.

Its subcellular location is the postsynaptic cell membrane. The protein resides in the cell membrane. It catalyses the reaction K(+)(in) = K(+)(out). It carries out the reaction Na(+)(in) = Na(+)(out). Its function is as follows. After binding acetylcholine, the AChR responds by an extensive change in conformation that affects all subunits and leads to opening of an ion-conducting channel across the plasma membrane. This chain is Acetylcholine receptor subunit gamma (CHRNG), found in Tetronarce californica (Pacific electric ray).